The chain runs to 371 residues: 4-hydroxy-3-methylbut-2-en-1-yl diphosphate synthase (flavodoxin) (371 aa).

4 residues coordinate [4Fe-4S] cluster: Cys-270, Cys-273, Cys-305, and Glu-312.

Belongs to the IspG family. [4Fe-4S] cluster serves as cofactor.

It catalyses the reaction (2E)-4-hydroxy-3-methylbut-2-enyl diphosphate + oxidized [flavodoxin] + H2O + 2 H(+) = 2-C-methyl-D-erythritol 2,4-cyclic diphosphate + reduced [flavodoxin]. The protein operates within isoprenoid biosynthesis; isopentenyl diphosphate biosynthesis via DXP pathway; isopentenyl diphosphate from 1-deoxy-D-xylulose 5-phosphate: step 5/6. In terms of biological role, converts 2C-methyl-D-erythritol 2,4-cyclodiphosphate (ME-2,4cPP) into 1-hydroxy-2-methyl-2-(E)-butenyl 4-diphosphate. The polypeptide is 4-hydroxy-3-methylbut-2-en-1-yl diphosphate synthase (flavodoxin) (Shewanella sp. (strain W3-18-1)).